We begin with the raw amino-acid sequence, 258 residues long: MLAKRIIPCLDVKSGIVVKGVQFRNHEIVGGILSLAKRYTQEGADELVFYDIEASSNNRLIKKKWVSQIAEIINIPFCVAGGIQTIQDVQSILSSGADKISINSPAISDPYLISRIADRFGVQCVVVGIDSWFNKEESQYYVYQYTGDNTKTIKTSWKTCDWVQKVQALGAGEIVLNVMNQDGMKNGYDLVQLKKIRKICNVPLIASGGAGDYFHFYDVFNEAKVDGALAASVFHNRIIKINQLKKFLMKKGLEIRVC.

Active-site residues include Asp-11 and Asp-130.

This sequence belongs to the HisA/HisF family. Heterodimer of HisH and HisF.

It localises to the cytoplasm. It carries out the reaction 5-[(5-phospho-1-deoxy-D-ribulos-1-ylimino)methylamino]-1-(5-phospho-beta-D-ribosyl)imidazole-4-carboxamide + L-glutamine = D-erythro-1-(imidazol-4-yl)glycerol 3-phosphate + 5-amino-1-(5-phospho-beta-D-ribosyl)imidazole-4-carboxamide + L-glutamate + H(+). Its pathway is amino-acid biosynthesis; L-histidine biosynthesis; L-histidine from 5-phospho-alpha-D-ribose 1-diphosphate: step 5/9. IGPS catalyzes the conversion of PRFAR and glutamine to IGP, AICAR and glutamate. The HisF subunit catalyzes the cyclization activity that produces IGP and AICAR from PRFAR using the ammonia provided by the HisH subunit. In Buchnera aphidicola subsp. Baizongia pistaciae (strain Bp), this protein is Imidazole glycerol phosphate synthase subunit HisF.